Consider the following 81-residue polypeptide: MDPLISAASVIAAGLAVGLASIGPGVGQGTAAGQAVEGIARQPEAEGKIRGTLLLSLAFMEALTIYGLVVALALLFANPFV.

2 helical membrane passes run 3–23 (PLIS…ASIG) and 57–77 (LAFM…LLFA).

It belongs to the ATPase C chain family. As to quaternary structure, F-type ATPases have 2 components, F(1) - the catalytic core - and F(0) - the membrane proton channel. F(1) has five subunits: alpha(3), beta(3), gamma(1), delta(1), epsilon(1). F(0) has four main subunits: a(1), b(1), b'(1) and c(10-14). The alpha and beta chains form an alternating ring which encloses part of the gamma chain. F(1) is attached to F(0) by a central stalk formed by the gamma and epsilon chains, while a peripheral stalk is formed by the delta, b and b' chains.

The protein resides in the plastid. It localises to the chloroplast thylakoid membrane. In terms of biological role, f(1)F(0) ATP synthase produces ATP from ADP in the presence of a proton or sodium gradient. F-type ATPases consist of two structural domains, F(1) containing the extramembraneous catalytic core and F(0) containing the membrane proton channel, linked together by a central stalk and a peripheral stalk. During catalysis, ATP synthesis in the catalytic domain of F(1) is coupled via a rotary mechanism of the central stalk subunits to proton translocation. Key component of the F(0) channel; it plays a direct role in translocation across the membrane. A homomeric c-ring of between 10-14 subunits forms the central stalk rotor element with the F(1) delta and epsilon subunits. The protein is ATP synthase subunit c, chloroplastic of Ipomoea purpurea (Common morning glory).